Consider the following 363-residue polypeptide: Putative C-&gt;U-editing enzyme APOBEC-4 (363 aa).

Residues 61 to 177 (PQTKHLTFYE…AWNREALRSL (117 aa)) enclose the CMP/dCMP-type deaminase domain. Residue histidine 93 coordinates Zn(2+). The active-site Proton donor is glutamate 95. Cysteine 127 and cysteine 134 together coordinate Zn(2+).

It belongs to the cytidine and deoxycytidylate deaminase family. It depends on Zn(2+) as a cofactor.

In terms of biological role, putative C to U editing enzyme whose physiological substrate is not yet known. The sequence is that of Putative C-&gt;U-editing enzyme APOBEC-4 (APOBEC4) from Macaca fascicularis (Crab-eating macaque).